The primary structure comprises 1723 residues: MADEERVPAPYFQDDEEGGASDEGEGVDLIKSHGNLVGSGGEDSSDEEEDDDPEEARRVAEGFIAEDDEEEEEDSEARRDRRRRRKKKRKQNEQDFEVDEDDLELLAENTGQPRRKEAGRLKRFRRGSASPPADDEAAARQRTLDQIFEDDDEDEDDIRSGRRGVNYDDDDEDLPSVGQALRAGVARKQREVVGAYEDDGLDDFIEEDEDDEEMQGLDEEEREARRQQRREEKRKARLSGSAADPAKAGIDHEAWDEIHEIFGNGEDYFWALEDEEEDAFDEEKKNKMEYKDIFEPAQIAERMLTEDDERIKRIDIPERLQLACPGEEGLKLLERKLTDTELFEAAKWASTRISQRTAAEFLDEAGLFHRQRSEFINAVQLMLSYMLNDLLEVPFLFQHRFDELEHLTFDEVERQYRSIDLLTRRELYTLSGLGLKFKTLLVRKDQLRATFNKIHVDVKTEPIQDDELDGGLDAMPADESRAARVESSQRQRAIFEDMLAQAASLEEISDITEYLTLRYGQQMRDAQALTSNGTDQAASDLQGLTLTSDPLVSATPAFKKPSLVGQYERNKKTVLAELAKKFGITSDELASNVTSHTRQYSPRDPEESPFKFAEQFTGSAWGAHSPEIALAKAKMMLSQEIGKDPILKREMRQLFKDAAEINIEPTERGMTVIDDQHPYANFKFIANKPARLVPQNPSQYLQMLQAEDELLIKLDIDLKDVVLTRFEARLYNNYASEGVGELSNAWNEQRRDVIREALKTHLVPNGRIWLKEFLREESRETLLRHVDVLMTKRVQEGPFMSKSMMARNRDPKIEEEDRIPRVLAVSHGGGDPRKDVVQAVYLDERGRFREHATFDDLRPLSARQMQERELELERTRGKAEFVDHRADFVKLLKQRRPDIVVVSGWSVRTAELKRHVQELADTAHQEICDADRLHSDLERDQAVIDVVTCHDDVARIYQHSSRAAEEFPELSELGRYCLALARYAQSPVNEFAALGSDLTAVILDPNQRLLPQDRLRLHFERCIGAVVNENGVEINQAMTSTYLQTMLPFVAGLGPRKAHALVNAISTKLEGTLINRTLLISRNILTFQVFQNCASFLRIEQDMLLEADEDDVPDVLDSTRIHPEDYDFPRKMAADALNKHEEDLEGEHPSLPCKELMEDADPADKLNTLDLDNYATMLFERKGERKRATLHSCRTELIKPYDDLREKQSEPSLEEMLTMFTGETSKTLAEGFVVSVEVTRVQEGNRMQEGHIKCRLDSGIEGTIEAEHAVEHYTPGSVRLRDLVRPQQTLDALVRKIDYKMCTVQLSISPWELQHRATHQGKTPIDIKFYDRRKADQWNEHAAAKAKLRIQARRQNRVIDHPNYHNFNYKAAVTFLRSQPRGTVVVRPSSKGDDHLAVTWKVDDDVYQNIDVTELDKESEYSLGRVLRIEGMGSYSDLDELIVNHVKPMVHMVEMMMNHEKYKGADEEDLHRFLTNWSLANPSRSVYAFGLNKDRPGYFNLSFKANRDAAIQTWPVKVLPNAFKLGPADQLADVAALCNAFKTQYTTQASMARGAKTPYGGGRTPAPGMGGATPLGGRTPYGGVRNGMAGSATPGQGVAGGYTTPMINVASATPNPYGGAYGRNGAAGGYGAPAAGGPPGRPPSMPGAPPMMPPGMASGGGAPSYAPPFAGAGEPGPPPARPPVPHGMHPDRFAQAEYGGASQQSYGENSGGAGGYGGGYRGY.

The tract at residues methionine 1–lysine 247 is disordered. Composition is skewed to acidic residues over residues glutamine 13–glycine 26, aspartate 43–glutamate 54, and isoleucine 64–serine 75. A compositionally biased stretch (basic residues) spans aspartate 80–lysine 90. 3 stretches are compositionally biased toward acidic residues: residues glutamine 94–leucine 105, isoleucine 147–aspartate 157, and tyrosine 196–glutamate 221. The span at arginine 222 to arginine 234 shows a compositional bias: basic and acidic residues. In terms of domain architecture, SH2 spans asparagine 1363–histidine 1445. Positions alanine 1632–tyrosine 1723 are disordered. Over residues proline 1639–proline 1653 the composition is skewed to pro residues. Residues proline 1663–alanine 1672 show a composition bias toward low complexity. Over residues proline 1675–proline 1685 the composition is skewed to pro residues. Positions asparagine 1709–tyrosine 1723 are enriched in gly residues.

This sequence belongs to the SPT6 family.

Its subcellular location is the nucleus. It is found in the chromosome. Its function is as follows. Histone H3-H4 chaperone that plays a role in maintenance of chromatin structure during RNA polymerase II transcription elongation thereby repressing transcription initiation from cryptic promoters. Mediates the reassembly of nucleosomes onto the promoters of at least a selected set of genes during repression; the nucleosome reassembly is essential for transcriptional repression. Essential for viability. This Mycosarcoma maydis (Corn smut fungus) protein is Transcription elongation factor SPT6 (SPT6).